Consider the following 152-residue polypeptide: D-aminoacyl-tRNA deacylase (152 aa).

The Gly-cisPro motif, important for rejection of L-amino acids signature appears at 137–138 (GP).

This sequence belongs to the DTD family. Homodimer.

The protein localises to the cytoplasm. The catalysed reaction is glycyl-tRNA(Ala) + H2O = tRNA(Ala) + glycine + H(+). The enzyme catalyses a D-aminoacyl-tRNA + H2O = a tRNA + a D-alpha-amino acid + H(+). Its function is as follows. An aminoacyl-tRNA editing enzyme that deacylates mischarged D-aminoacyl-tRNAs. Also deacylates mischarged glycyl-tRNA(Ala), protecting cells against glycine mischarging by AlaRS. Acts via tRNA-based rather than protein-based catalysis; rejects L-amino acids rather than detecting D-amino acids in the active site. By recycling D-aminoacyl-tRNA to D-amino acids and free tRNA molecules, this enzyme counteracts the toxicity associated with the formation of D-aminoacyl-tRNA entities in vivo and helps enforce protein L-homochirality. This chain is D-aminoacyl-tRNA deacylase, found in Aromatoleum aromaticum (strain DSM 19018 / LMG 30748 / EbN1) (Azoarcus sp. (strain EbN1)).